The sequence spans 195 residues: MSHLFAHLARMKLIQRWPLMYNVRTENVQEHSLQVAMVAHALVIISNRKFGTTLDAHQATSLAIFHDASEILTGDLPTPVKYFNKEIEAEYKKIEAIAEQRMLDMVPDEFKEDYRSLFISDYADPTYKAIVKSADTLCAYLKCLEENRAGNTEFNTARKRLEAMLESNPNPAVKYFMDCFVPSFTLNLDEINKML.

Substrate-binding positions include 16–17 (RW) and H31. Residues 28–140 (VQEHSLQVAM…VKSADTLCAY (113 aa)) enclose the HD domain. 3 residues coordinate a divalent metal cation: H31, H66, and D67. Residues D67, 75–78 (DLPT), and D135 contribute to the substrate site. Residue D135 coordinates a divalent metal cation.

The protein belongs to the 5DNU family. As to quaternary structure, homodimer. The cofactor is a divalent metal cation.

The protein localises to the cytoplasm. The catalysed reaction is a 2'-deoxyribonucleoside 5'-phosphate + H2O = a 2'-deoxyribonucleoside + phosphate. Functionally, catalyzes the strictly specific dephosphorylation of 2'-deoxyribonucleoside 5'-monophosphates. This is 5'-deoxynucleotidase SO_2484 from Shewanella oneidensis (strain ATCC 700550 / JCM 31522 / CIP 106686 / LMG 19005 / NCIMB 14063 / MR-1).